Consider the following 188-residue polypeptide: MVNQSKPEVAIFGGSFDPPHKGHQQIVRKAVQILDIDKLIVLPAYLNPFKNVSLANPEKRLEWCYQLFDGIPKVVVDDYEIRQNKSVRTSQSVKHFNNTYSVKYLIIGSDNLSTLTKWHEFKWLNDHITWVIVTRKGHPVQTEGLKSWRILEIDFPISSTTIREKKDLRYIDNKIKQSVEKTIKDKKE.

Belongs to the NadD family.

The enzyme catalyses nicotinate beta-D-ribonucleotide + ATP + H(+) = deamido-NAD(+) + diphosphate. It functions in the pathway cofactor biosynthesis; NAD(+) biosynthesis; deamido-NAD(+) from nicotinate D-ribonucleotide: step 1/1. In terms of biological role, catalyzes the reversible adenylation of nicotinate mononucleotide (NaMN) to nicotinic acid adenine dinucleotide (NaAD). This Sulfurovum sp. (strain NBC37-1) protein is Probable nicotinate-nucleotide adenylyltransferase.